A 387-amino-acid polypeptide reads, in one-letter code: 3-ketoacyl-CoA thiolase (387 aa).

Residue Cys91 is the Acyl-thioester intermediate of the active site. Residues His343 and Cys373 each act as proton acceptor in the active site.

It belongs to the thiolase-like superfamily. Thiolase family. As to quaternary structure, heterotetramer of two alpha chains (FadB) and two beta chains (FadA).

It localises to the cytoplasm. It catalyses the reaction an acyl-CoA + acetyl-CoA = a 3-oxoacyl-CoA + CoA. Its pathway is lipid metabolism; fatty acid beta-oxidation. Its function is as follows. Catalyzes the final step of fatty acid oxidation in which acetyl-CoA is released and the CoA ester of a fatty acid two carbons shorter is formed. The polypeptide is 3-ketoacyl-CoA thiolase (Shewanella sp. (strain ANA-3)).